The chain runs to 521 residues: Vang-like protein 2-A (521 aa).

The interval 1-81 (MDNDSQYSGY…TTVVTGTSEH (81 aa)) is disordered. Residues 1–108 (MDNDSQYSGY…AKLDCSRHLG (108 aa)) lie on the Cytoplasmic side of the membrane. Residues 15-33 (GHSRSSRKHRDRRERHRSK) are compositionally biased toward basic residues. The span at 57–67 (ESTRGEDRDDN) shows a compositional bias: basic and acidic residues. Positions 69 to 81 (GETTTVVTGTSEH) are enriched in low complexity. A helical membrane pass occupies residues 109–129 (VVIGGALALLSFLTPIAFMLL). Residues 130-147 (PQILWREDLEQCGTACEG) lie on the Extracellular side of the membrane. The chain crosses the membrane as a helical span at residues 148–168 (LFISVAFKLLILLLGSWALFF). Over 169–178 (RRPKAFFPRV) the chain is Cytoplasmic. A helical membrane pass occupies residues 179 to 199 (FVFRALLMVLVFLLVVSYWLF). The Extracellular segment spans residues 200–218 (YGVRILESRDKNYQGIVQY). Residues 219-239 (AVSLVDALLFVHYLAVVLLEL) form a helical membrane-spanning segment. Topologically, residues 240–521 (RQLQPQFTIK…VMRLQSETSV (282 aa)) are cytoplasmic. Residues 518–521 (ETSV) carry the PDZ-binding motif.

Belongs to the Vang family. Interacts with dvl/dsh. Interacts with prickle3. In terms of tissue distribution, during gastrulation, broadly expressed throughout the marginal zone and animal cap region. From the neurula stages, expression becomes concentrated in neural tissues, in the neural plate and neural tube.

It localises to the cell membrane. Has a role in non-canonical Wnt/planar cell polarity (PCP) signaling; can recruit dvl/dsh and prickle from the cytoplasm to the plasma membrane. Acts in a PCP complex to regulate the polarized assembly of fibronectrin on the surface of the mesoderm during gastrulation. Regulates convergent extension cell movements in both dorsal mesoderm and neural tissue during gastrulation, without affecting cell fate. Regulates neural fold closure during neurulation. May be required for cell surface localization of fzd3 and fzd6 in the inner ear. This Xenopus laevis (African clawed frog) protein is Vang-like protein 2-A (vangl2-a).